The chain runs to 1179 residues: MWLFHTLLCIASLALLAAFNVDVARPWLTPKGGAPFVLSSLLHQDPSTNQTWLLVTSPRTKRTPGPLHRCSLVQDEILCHPVEHVPIPKGRHRGVTVVRSHHGVLICIQVLVRRPHSLSSELTGTCSLLGPDLRPQAQANFFDLENLLDPDARVDTGDCYSNKEGGGEDDVNTARQRRALEKEEEEDKEEEEDEEEEEAGTEIAIILDGSGSIDPPDFQRAKDFISNMMRNFYEKCFECNFALVQYGGVIQTEFDLRDSQDVMASLARVQNITQVGSVTKTASAMQHVLDSIFTSSHGSRRKASKVMVVLTDGGIFEDPLNLTTVINSPKMQGVERFAIGVGEEFKSARTARELNLIASDPDETHAFKVTNYMALDGLLSKLRYNIISMEGTVGDALHYQLAQIGFSAQILDERQVLLGAVGAFDWSGGALLYDTRSRRGRFLNQTAAAAADAEAAQYSYLGYAVAVLHKTCSLSYIAGAPRYKHHGAVFELQKEGREASFLPVLEGEQMGSYFGSELCPVDIDMDGSTDFLLVAAPFYHVHGEEGRVYVYRLSEQDGSFSLARILSGHPGFTNARFGFAMAAMGDLSQDKLTDVAIGAPLEGFGADDGASFGSVYIYNGHWDGLSASPSQRIRASTVAPGLQYFGMSMAGGFDISGDGLADITVGTLGQAVVFRSRPVVRLKVSMAFTPSALPIGFNGVVNVRLCFEISSVTTASESGLREALLNFTLDVDVGKQRRRLQCSDVRSCLGCLREWSSGSQLCEDLLLMPTEGELCEEDCFSNASVKVSYQLQTPEGQTDHPQPILDRYTEPFAIFQLPYEKACKNKLFCVAELQLATTVSQQELVVGLTKELTLNINLTNSGEDSYMTSMALNYPRNLQLKRMQKPPSPNIQCDDPQPVASVLIMNCRIGHPVLKRSSAHVSVVWQLEENAFPNRTADITVTVTNSNERRSLANETHTLQFRHGFVAVLSKPSIMYVNTGQGLSHHKEFLFHVHGENLFGAEYQLQICVPTKLRGLQVVAVKKLTRTQASTVCTWSQERACAYSSVQHVEEWHSVSCVIASDKENVTVAAEISWDHSEELLKDVTELQILGEISFNKSLYEGLNAENHRTKITVVFLKDEKYHSLPIIIKGSVGGLLVLIVILVILFKCGFFKRKYQQLNLESIRKAQLKSENLLEEEN.

The N-terminal stretch at 1–18 is a signal peptide; it reads MWLFHTLLCIASLALLAA. Residues 19–1124 lie on the Extracellular side of the membrane; that stretch reads FNVDVARPWL…VFLKDEKYHS (1106 aa). 2 FG-GAP repeats span residues 22–79 and 80–138; these read DVAR…EILC and HPVE…PQAQ. The N-linked (GlcNAc...) asparagine glycan is linked to Asn49. 2 cysteine pairs are disulfide-bonded: Cys70–Cys79 and Cys126–Cys159. The interval 145-199 is X-domain (extra domain); sequence ENLLDPDARVDTGDCYSNKEGGGEDDVNTARQRRALEKEEEEDKEEEEDEEEEEA. Positions 158-200 are disordered; sequence DCYSNKEGGGEDDVNTARQRRALEKEEEEDKEEEEDEEEEEAG. Residues 182 to 200 show a composition bias toward acidic residues; the sequence is KEEEEDKEEEEDEEEEEAG. A VWFA domain is found at 200–389; that stretch reads GTEIAIILDG…SKLRYNIISM (190 aa). Asn271 and Asn321 each carry an N-linked (GlcNAc...) asparagine glycan. One copy of the FG-GAP 3 repeat lies at 390-442; sequence EGTVGDALHYQLAQIGFSAQILDERQVLLGAVGAFDWSGGALLYDTRSRRGRF. N-linked (GlcNAc...) asparagine glycosylation occurs at Asn444. FG-GAP repeat units follow at residues 447 to 499, 500 to 560, 563 to 627, and 631 to 691; these read AAAA…GREA, SFLP…DGSF, ARIL…GLSA, and QRIR…FTPS. Ca(2+)-binding residues include Asp522, Asp524, Asp526, Asp530, Asp586, Ser588, Asp590, Asp594, Asp654, Ser656, Asp658, and Asp662. Cys706 and Cys762 form a disulfide bridge. Residues Asn726 and Asn782 are each glycosylated (N-linked (GlcNAc...) asparagine). Cysteines 823 and 829 form a disulfide. Residue Asn857 is glycosylated (N-linked (GlcNAc...) asparagine). Cys893 and Cys907 form a disulfide bridge. Residues Asn934 and Asn954 are each glycosylated (N-linked (GlcNAc...) asparagine). 2 cysteine pairs are disulfide-bonded: Cys1008–Cys1033 and Cys1041–Cys1057. N-linked (GlcNAc...) asparagine glycosylation is found at Asn1065 and Asn1096. Residues 1125–1147 traverse the membrane as a helical segment; it reads LPIIIKGSVGGLLVLIVILVILF. Over 1148–1179 the chain is Cytoplasmic; the sequence is KCGFFKRKYQQLNLESIRKAQLKSENLLEEEN. The GFFKR motif motif lies at 1150–1154; it reads GFFKR.

Belongs to the integrin alpha chain family. As to quaternary structure, heterodimer of an alpha and a beta subunit. The alpha subunit is composed of a heavy and a light chains linked by a disulfide bond. Alpha-E associates with beta-7. As to expression, expressed on a subclass of T-lymphocytes known as intra-epithelial lymphocytes which are located between mucosal epithelial cells.

The protein localises to the membrane. Integrin alpha-E/beta-7 is a receptor for E-cadherin. It mediates adhesion of intra-epithelial T-lymphocytes to epithelial cell monolayers. In Homo sapiens (Human), this protein is Integrin alpha-E (ITGAE).